A 333-amino-acid chain; its full sequence is Protoheme IX farnesyltransferase (333 aa).

8 helical membrane-spanning segments follow: residues 63–83 (LACT…LNCI), 109–129 (AAFI…VSGV), 132–152 (LAAG…TAIL), 160–180 (IVIG…AASG), 188–208 (WLFS…ALLL), 214–234 (AVGI…RAIS), 245–265 (GFGV…LIPF), and 292–312 (WSIF…LPMA).

The protein belongs to the UbiA prenyltransferase family. Protoheme IX farnesyltransferase subfamily.

It is found in the cell inner membrane. The catalysed reaction is heme b + (2E,6E)-farnesyl diphosphate + H2O = Fe(II)-heme o + diphosphate. It functions in the pathway porphyrin-containing compound metabolism; heme O biosynthesis; heme O from protoheme: step 1/1. In terms of biological role, converts heme B (protoheme IX) to heme O by substitution of the vinyl group on carbon 2 of heme B porphyrin ring with a hydroxyethyl farnesyl side group. The chain is Protoheme IX farnesyltransferase from Prochlorococcus marinus (strain MIT 9313).